A 104-amino-acid polypeptide reads, in one-letter code: Small ribosomal subunit protein uS10 (104 aa).

The protein belongs to the universal ribosomal protein uS10 family. In terms of assembly, part of the 30S ribosomal subunit.

In terms of biological role, involved in the binding of tRNA to the ribosomes. In Helicobacter pylori (strain P12), this protein is Small ribosomal subunit protein uS10.